The following is a 358-amino-acid chain: Fructose-bisphosphate aldolase (358 aa).

Ser61 contributes to the D-glyceraldehyde 3-phosphate binding site. Catalysis depends on Asp108, which acts as the Proton donor. Zn(2+) is bound by residues His109, Asp143, Glu173, and His225. Residue Gly226 coordinates dihydroxyacetone phosphate. A Zn(2+)-binding site is contributed by His264. Dihydroxyacetone phosphate contacts are provided by residues Gly265–Ser267 and Asn286–Thr289. Residues Thr289, Thr312, Thr340, and Thr342 each carry the phosphothreonine modification.

It belongs to the class II fructose-bisphosphate aldolase family. In terms of assembly, homodimer. Zn(2+) serves as cofactor.

The enzyme catalyses beta-D-fructose 1,6-bisphosphate = D-glyceraldehyde 3-phosphate + dihydroxyacetone phosphate. Its pathway is carbohydrate degradation; glycolysis; D-glyceraldehyde 3-phosphate and glycerone phosphate from D-glucose: step 4/4. Catalyzes the aldol condensation of dihydroxyacetone phosphate (DHAP or glycerone-phosphate) with glyceraldehyde 3-phosphate (G3P) to form fructose 1,6-bisphosphate (FBP) in gluconeogenesis and the reverse reaction in glycolysis. This chain is Fructose-bisphosphate aldolase (fba1), found in Schizosaccharomyces pombe (strain 972 / ATCC 24843) (Fission yeast).